The primary structure comprises 147 residues: SPI-1 type 3 secretion system pilotin (147 aa).

Residues 1–15 form the signal peptide; that stretch reads MKKFYSCLPVFLLIG. Residue Cys16 is the site of N-palmitoyl cysteine attachment. Cys16 carries S-diacylglycerol cysteine lipidation.

It belongs to the InvH family.

Its subcellular location is the cell outer membrane. In terms of biological role, involved in the synthesis of the type III secretion system (T3SS), also called injectisome, which is used to inject bacterial effector proteins into eukaryotic host cells. Pilot protein that is required for the proper localization of the secretin InvG/SctC in the outer membrane. Necessary for efficient adherence and entry of these organisms into cultured epithelial cells. This chain is SPI-1 type 3 secretion system pilotin, found in Salmonella typhimurium (strain SL1344).